The chain runs to 492 residues: Trypanothione reductase (492 aa).

Aspartate 35–cysteine 52 serves as a coordination point for FAD. Cysteine 52 and cysteine 57 are disulfide-bonded. The active-site Proton acceptor is histidine 461.

It belongs to the class-I pyridine nucleotide-disulfide oxidoreductase family. As to quaternary structure, homodimer. Requires FAD as cofactor.

Its subcellular location is the cytoplasm. It carries out the reaction trypanothione + NADP(+) = trypanothione disulfide + NADPH + H(+). Functionally, trypanothione is the parasite analog of glutathione; this enzyme is the equivalent of glutathione reductase. The protein is Trypanothione reductase (TPR) of Trypanosoma brucei brucei.